Here is a 450-residue protein sequence, read N- to C-terminus: Probable ATP-dependent RNA helicase MG425 homolog (450 aa).

A Q motif motif is present at residues 3–31 (STFNELGVSPALIATLKDNNINQPTTIQQ). In terms of domain architecture, Helicase ATP-binding spans 34–206 (IPQFLQHQNL…KQITKNGIFL (173 aa)). An ATP-binding site is contributed by 47 to 54 (SPTGTGKT). The DEVD box signature appears at 154-157 (DEVD). The region spanning 234-384 (RKKQALYSLV…PLRPMRLRLI (151 aa)) is the Helicase C-terminal domain. Positions 429-450 (MRQPERDMQKNKLHDSDWQSNM) are disordered. A compositionally biased stretch (basic and acidic residues) spans 430 to 450 (RQPERDMQKNKLHDSDWQSNM).

It belongs to the DEAD box helicase family.

It carries out the reaction ATP + H2O = ADP + phosphate + H(+). This chain is Probable ATP-dependent RNA helicase MG425 homolog, found in Mycoplasma pneumoniae (strain ATCC 29342 / M129 / Subtype 1) (Mycoplasmoides pneumoniae).